A 268-amino-acid polypeptide reads, in one-letter code: Ubiquinone biosynthesis protein COQ4 homolog 1, mitochondrial (268 aa).

Residues 1–10 (MFLRRVHPVR) show a composition bias toward basic residues. The N-terminal 18 residues, 1 to 18 (MFLRRVHPVRLGHASQRS), are a transit peptide targeting the mitochondrion. The segment at 1–44 (MFLRRVHPVRLGHASQRSLTTTKSRNESTTTTVEAPQAAPSPPP) is disordered. The span at 20–38 (TTTKSRNESTTTTVEAPQA) shows a compositional bias: low complexity. Histidine 177, aspartate 178, histidine 181, and glutamate 193 together coordinate Zn(2+).

This sequence belongs to the COQ4 family. As to quaternary structure, component of a multi-subunit COQ enzyme complex. Zn(2+) serves as cofactor.

The protein localises to the mitochondrion inner membrane. The catalysed reaction is a 4-hydroxy-3-methoxy-5-(all-trans-polyprenyl)benzoate + H(+) = a 2-methoxy-6-(all-trans-polyprenyl)phenol + CO2. It participates in cofactor biosynthesis; ubiquinone biosynthesis. In terms of biological role, lyase that catalyzes the C1-decarboxylation of 4-hydroxy-3-methoxy-5-(all-trans-polyprenyl)benzoic acid into 2-methoxy-6-(all-trans-polyprenyl)phenol during ubiquinone biosynthesis. This Culex quinquefasciatus (Southern house mosquito) protein is Ubiquinone biosynthesis protein COQ4 homolog 1, mitochondrial.